Here is an 89-residue protein sequence, read N- to C-terminus: Small ribosomal subunit protein uS15 (89 aa).

This sequence belongs to the universal ribosomal protein uS15 family. As to quaternary structure, part of the 30S ribosomal subunit. Forms a bridge to the 50S subunit in the 70S ribosome, contacting the 23S rRNA.

One of the primary rRNA binding proteins, it binds directly to 16S rRNA where it helps nucleate assembly of the platform of the 30S subunit by binding and bridging several RNA helices of the 16S rRNA. Its function is as follows. Forms an intersubunit bridge (bridge B4) with the 23S rRNA of the 50S subunit in the ribosome. This chain is Small ribosomal subunit protein uS15, found in Bacillus anthracis (strain CDC 684 / NRRL 3495).